The chain runs to 840 residues: Urease (840 aa).

The Urease domain maps to 402 to 840 (GAIDCHVHYI…VPLSRNYFLF (439 aa)). Histidine 407, histidine 409, and lysine 490 together coordinate Ni(2+). Lysine 490 bears the N6-carboxylysine mark. Substrate is bound at residue histidine 492. Residues histidine 519 and histidine 545 each contribute to the Ni(2+) site. Histidine 593 serves as the catalytic Proton donor. Residue aspartate 633 participates in Ni(2+) binding.

The protein in the C-terminal section; belongs to the metallo-dependent hydrolases superfamily. Urease alpha subunit family. In terms of assembly, homohexamer. Other oligomeric forms may exist depending on pH and presence of salts. The cofactor is Ni cation. Carboxylation allows a single lysine to coordinate two nickel ions.

The catalysed reaction is urea + 2 H2O + H(+) = hydrogencarbonate + 2 NH4(+). The protein operates within nitrogen metabolism; urea degradation; CO(2) and NH(3) from urea (urease route): step 1/1. P-hydroxymercuribenzoate irreversibly abolishes ureolytic activity, but does not inhibit the ability to activate platelets. Also inhibited by acetohydroxamic acid (AHA), a chelator of Ni2+ and Zn2+ ions. In terms of biological role, urea hydrolase involved in nitrogen recycling from ureide, purine, and arginine catabolism. Is known to be highly toxic and lethal when given by intravenous route, producing convulsions and other signs of central nervous system intoxication associated with the high levels of ammonia formed in the blood of mice and rabbits. Is neurotoxic in mammals, when directly injected into hippocampus. It may induce seizures by acting at a neuronal network level, thereby disturbing electroencephalographic rhythms and causing metabolic alterations in key areas related to epileptogenesis and to neurogenic pulmonary edema. It increases calcium influx and neuronal firing rate in the hippocampus. Is able to insert itself into lipid bilayers, altering physicochemical properties of artificial membranes, and forming cation-selective ion channels. In vitro, has the ability to induce platelet aggregation, platelet granules secretion and release of ATP. In contrast to canatoxin, another urease from C.ensiformis, is not lethal to mice when intraperitoneally injected. This Canavalia ensiformis (Jack bean) protein is Urease.